Here is a 317-residue protein sequence, read N- to C-terminus: Carbonic anhydrase 5B, mitochondrial (317 aa).

The transit peptide at 1–33 directs the protein to the mitochondrion; the sequence is MVVMNSLRVILQASPGKLLWRKFQIPRFMPARP. An Alpha-carbonic anhydrase domain is found at 37–296; that stretch reads YTCTYKTRNR…LMNRTVRSSF (260 aa). Residues His-130, His-132, and His-155 each coordinate Zn(2+). 235-236 is a substrate binding site; that stretch reads TT.

It belongs to the alpha-carbonic anhydrase family. Zn(2+) serves as cofactor. In terms of tissue distribution, strongest expression in heart, pancreas, kidney, placenta, lung, and skeletal muscle. Not expressed in liver.

Its subcellular location is the mitochondrion. It catalyses the reaction hydrogencarbonate + H(+) = CO2 + H2O. Its activity is regulated as follows. Inhibited by coumarins, sulfonamide derivatives such as acetazolamide (AZA), saccharin and Foscarnet (phosphonoformate trisodium salt). Mitochondrial carbonic anhydrase that catalyzes the reversible conversion of carbon dioxide to bicarbonate/HCO3. This chain is Carbonic anhydrase 5B, mitochondrial (CA5B), found in Homo sapiens (Human).